A 31-amino-acid polypeptide reads, in one-letter code: Cytochrome b6-f complex subunit 6 (31 aa).

Residues 3 to 23 traverse the membrane as a helical segment; it reads VFLGYIIFLAAFFGLATGLFL.

Belongs to the PetL family. The 4 large subunits of the cytochrome b6-f complex are cytochrome b6, subunit IV (17 kDa polypeptide, PetD), cytochrome f and the Rieske protein, while the 4 small subunits are PetG, PetL, PetM and PetN. The complex functions as a dimer.

The protein localises to the plastid. Its subcellular location is the chloroplast thylakoid membrane. Functionally, component of the cytochrome b6-f complex, which mediates electron transfer between photosystem II (PSII) and photosystem I (PSI), cyclic electron flow around PSI, and state transitions. PetL is important for photoautotrophic growth as well as for electron transfer efficiency and stability of the cytochrome b6-f complex. The sequence is that of Cytochrome b6-f complex subunit 6 from Pyropia yezoensis (Susabi-nori).